Reading from the N-terminus, the 254-residue chain is Triosephosphate isomerase (254 aa).

12-14 provides a ligand contact to substrate; sequence NWK. The active-site Electrophile is the His-99. Catalysis depends on Glu-169, which acts as the Proton acceptor. Residues Gly-175, Ser-214, and 235–236 contribute to the substrate site; that span reads GG.

The protein belongs to the triosephosphate isomerase family. Homodimer.

It localises to the cytoplasm. It carries out the reaction D-glyceraldehyde 3-phosphate = dihydroxyacetone phosphate. It participates in carbohydrate biosynthesis; gluconeogenesis. It functions in the pathway carbohydrate degradation; glycolysis; D-glyceraldehyde 3-phosphate from glycerone phosphate: step 1/1. Its function is as follows. Involved in the gluconeogenesis. Catalyzes stereospecifically the conversion of dihydroxyacetone phosphate (DHAP) to D-glyceraldehyde-3-phosphate (G3P). The chain is Triosephosphate isomerase from Brucella abortus biovar 1 (strain 9-941).